Here is a 256-residue protein sequence, read N- to C-terminus: Thiazole synthase (256 aa).

The Schiff-base intermediate with DXP role is filled by Lys-95. 1-deoxy-D-xylulose 5-phosphate is bound by residues Gly-156, 182–183, and 204–205; these read AG and NT.

This sequence belongs to the ThiG family. Homotetramer. Forms heterodimers with either ThiH or ThiS.

The protein resides in the cytoplasm. The catalysed reaction is [ThiS sulfur-carrier protein]-C-terminal-Gly-aminoethanethioate + 2-iminoacetate + 1-deoxy-D-xylulose 5-phosphate = [ThiS sulfur-carrier protein]-C-terminal Gly-Gly + 2-[(2R,5Z)-2-carboxy-4-methylthiazol-5(2H)-ylidene]ethyl phosphate + 2 H2O + H(+). It functions in the pathway cofactor biosynthesis; thiamine diphosphate biosynthesis. In terms of biological role, catalyzes the rearrangement of 1-deoxy-D-xylulose 5-phosphate (DXP) to produce the thiazole phosphate moiety of thiamine. Sulfur is provided by the thiocarboxylate moiety of the carrier protein ThiS. In vitro, sulfur can be provided by H(2)S. This is Thiazole synthase from Idiomarina loihiensis (strain ATCC BAA-735 / DSM 15497 / L2-TR).